A 324-amino-acid chain; its full sequence is Beta-ketoacyl-[acyl-carrier-protein] synthase III (324 aa).

Active-site residues include Cys-112 and His-249. The tract at residues 250–254 (QANRR) is ACP-binding. Asn-279 is an active-site residue.

It belongs to the thiolase-like superfamily. FabH family. As to quaternary structure, homodimer.

It localises to the cytoplasm. It carries out the reaction malonyl-[ACP] + acetyl-CoA + H(+) = 3-oxobutanoyl-[ACP] + CO2 + CoA. Its pathway is lipid metabolism; fatty acid biosynthesis. Catalyzes the condensation reaction of fatty acid synthesis by the addition to an acyl acceptor of two carbons from malonyl-ACP. Catalyzes the first condensation reaction which initiates fatty acid synthesis and may therefore play a role in governing the total rate of fatty acid production. Possesses both acetoacetyl-ACP synthase and acetyl transacylase activities. Its substrate specificity determines the biosynthesis of branched-chain and/or straight-chain of fatty acids. In Streptococcus pyogenes serotype M2 (strain MGAS10270), this protein is Beta-ketoacyl-[acyl-carrier-protein] synthase III.